The primary structure comprises 331 residues: Glyceraldehyde-3-phosphate dehydrogenase (331 aa).

NAD(+)-binding positions include 12–13 (RI), aspartate 34, arginine 78, and threonine 120. D-glyceraldehyde 3-phosphate is bound by residues 149–151 (SCT), threonine 180, 209–210 (TG), and arginine 232. The Nucleophile role is filled by cysteine 150. Position 314 (asparagine 314) interacts with NAD(+).

It belongs to the glyceraldehyde-3-phosphate dehydrogenase family. As to quaternary structure, homotetramer.

The protein resides in the cytoplasm. It catalyses the reaction D-glyceraldehyde 3-phosphate + phosphate + NAD(+) = (2R)-3-phospho-glyceroyl phosphate + NADH + H(+). The protein operates within carbohydrate degradation; glycolysis; pyruvate from D-glyceraldehyde 3-phosphate: step 1/5. Its function is as follows. Catalyzes the oxidative phosphorylation of glyceraldehyde 3-phosphate (G3P) to 1,3-bisphosphoglycerate (BPG) using the cofactor NAD. The first reaction step involves the formation of a hemiacetal intermediate between G3P and a cysteine residue, and this hemiacetal intermediate is then oxidized to a thioester, with concomitant reduction of NAD to NADH. The reduced NADH is then exchanged with the second NAD, and the thioester is attacked by a nucleophilic inorganic phosphate to produce BPG. The sequence is that of Glyceraldehyde-3-phosphate dehydrogenase (gapA) from Salmonella typhi.